The primary structure comprises 355 residues: Holliday junction branch migration complex subunit RuvB (355 aa).

The interval 4 to 195 (TDKLTGADRL…FGIVARLEFY (192 aa)) is large ATPase domain (RuvB-L). ATP is bound by residues Leu-34, Arg-35, Gly-76, Lys-79, Thr-80, Thr-81, 142 to 144 (EDY), Arg-185, Tyr-195, and Arg-232. Residue Thr-80 coordinates Mg(2+). The segment at 196–266 (TPDELARIVA…LADAALEMLD (71 aa)) is small ATPAse domain (RuvB-S). The interval 269-355 (SVGFDLMDRK…DGGADLAEGL (87 aa)) is head domain (RuvB-H). DNA is bound by residues Arg-305, Arg-324, and Arg-329.

It belongs to the RuvB family. As to quaternary structure, homohexamer. Forms an RuvA(8)-RuvB(12)-Holliday junction (HJ) complex. HJ DNA is sandwiched between 2 RuvA tetramers; dsDNA enters through RuvA and exits via RuvB. An RuvB hexamer assembles on each DNA strand where it exits the tetramer. Each RuvB hexamer is contacted by two RuvA subunits (via domain III) on 2 adjacent RuvB subunits; this complex drives branch migration. In the full resolvosome a probable DNA-RuvA(4)-RuvB(12)-RuvC(2) complex forms which resolves the HJ.

It localises to the cytoplasm. It catalyses the reaction ATP + H2O = ADP + phosphate + H(+). The RuvA-RuvB-RuvC complex processes Holliday junction (HJ) DNA during genetic recombination and DNA repair, while the RuvA-RuvB complex plays an important role in the rescue of blocked DNA replication forks via replication fork reversal (RFR). RuvA specifically binds to HJ cruciform DNA, conferring on it an open structure. The RuvB hexamer acts as an ATP-dependent pump, pulling dsDNA into and through the RuvAB complex. RuvB forms 2 homohexamers on either side of HJ DNA bound by 1 or 2 RuvA tetramers; 4 subunits per hexamer contact DNA at a time. Coordinated motions by a converter formed by DNA-disengaged RuvB subunits stimulates ATP hydrolysis and nucleotide exchange. Immobilization of the converter enables RuvB to convert the ATP-contained energy into a lever motion, pulling 2 nucleotides of DNA out of the RuvA tetramer per ATP hydrolyzed, thus driving DNA branch migration. The RuvB motors rotate together with the DNA substrate, which together with the progressing nucleotide cycle form the mechanistic basis for DNA recombination by continuous HJ branch migration. Branch migration allows RuvC to scan DNA until it finds its consensus sequence, where it cleaves and resolves cruciform DNA. The sequence is that of Holliday junction branch migration complex subunit RuvB from Cupriavidus metallidurans (strain ATCC 43123 / DSM 2839 / NBRC 102507 / CH34) (Ralstonia metallidurans).